The primary structure comprises 73 residues: UPF0435 protein Lm4b_01721 (73 aa).

Belongs to the UPF0435 family.

The sequence is that of UPF0435 protein Lm4b_01721 from Listeria monocytogenes serotype 4b (strain CLIP80459).